We begin with the raw amino-acid sequence, 107 residues long: MMKVLVVVALLVTLISYSSSEGIDDLEADELLSLMANEQTRKECIPKHHECTSNKHGCCRGNFFKYKCQCTTVVTQDGEQTERCFCGTPSHHKAAELVVGFGKKIFG.

The first 20 residues, 1–20 (MMKVLVVVALLVTLISYSSS), serve as a signal peptide directing secretion. Positions 21-41 (EGIDDLEADELLSLMANEQTR) are excised as a propeptide. Intrachain disulfides connect Cys44-Cys59, Cys51-Cys68, Cys58-Cys86, and Cys70-Cys84.

This sequence belongs to the neurotoxin 19 (CSTX) family. 04 (U1-Lctx) subfamily. Expressed by the venom gland.

The protein resides in the secreted. This chain is U1-lycotoxin-Ls1n, found in Lycosa singoriensis (Wolf spider).